The primary structure comprises 298 residues: ATP phosphoribosyltransferase (298 aa).

The protein belongs to the ATP phosphoribosyltransferase family. Long subfamily. It depends on Mg(2+) as a cofactor.

It is found in the cytoplasm. The enzyme catalyses 1-(5-phospho-beta-D-ribosyl)-ATP + diphosphate = 5-phospho-alpha-D-ribose 1-diphosphate + ATP. It functions in the pathway amino-acid biosynthesis; L-histidine biosynthesis; L-histidine from 5-phospho-alpha-D-ribose 1-diphosphate: step 1/9. Its activity is regulated as follows. Feedback inhibited by histidine. Catalyzes the condensation of ATP and 5-phosphoribose 1-diphosphate to form N'-(5'-phosphoribosyl)-ATP (PR-ATP). Has a crucial role in the pathway because the rate of histidine biosynthesis seems to be controlled primarily by regulation of HisG enzymatic activity. This Aeromonas salmonicida (strain A449) protein is ATP phosphoribosyltransferase.